A 355-amino-acid chain; its full sequence is MLGIETTCDETAAAVVARDSDGKGRILSNVVRSQTDEHALYGGVVPEIAARAHVDMLDHLIDAAMREAGIDYADLNGVAAAAGPGLIGGVIVGLTTAKAIALVHDTPLIAVNHLEAHALTPRLTDAIDFPYCLFLASGGHTQIVAVAGVGDYVRLGTTVDDAMGEAFDKVAKMLGLPYPGGPQVEEAAQRGDAARFAFPRPMLGRSDANFSLSGLKTAVRNEIGRIAHVSAQDIADLCASFQAAVLESTADRLRVGLDLFKQRFGAPTALVAAGGVAANQAIRAALDDVAQQAGTRLIMPPPALCTDNGAMIAWAGLERLALGMIDGMDAAPRARWLLDANASVPGKFANTRAGF.

Fe cation contacts are provided by H113 and H117. Substrate contacts are provided by residues 135–139 (LASGG), D168, G181, and N279. Residue D307 participates in Fe cation binding.

The protein belongs to the KAE1 / TsaD family. Fe(2+) serves as cofactor.

The protein localises to the cytoplasm. It carries out the reaction L-threonylcarbamoyladenylate + adenosine(37) in tRNA = N(6)-L-threonylcarbamoyladenosine(37) in tRNA + AMP + H(+). Required for the formation of a threonylcarbamoyl group on adenosine at position 37 (t(6)A37) in tRNAs that read codons beginning with adenine. Is involved in the transfer of the threonylcarbamoyl moiety of threonylcarbamoyl-AMP (TC-AMP) to the N6 group of A37, together with TsaE and TsaB. TsaD likely plays a direct catalytic role in this reaction. The protein is tRNA N6-adenosine threonylcarbamoyltransferase of Bradyrhizobium sp. (strain BTAi1 / ATCC BAA-1182).